A 55-amino-acid polypeptide reads, in one-letter code: Large ribosomal subunit protein bL33 (55 aa).

It belongs to the bacterial ribosomal protein bL33 family.

This is Large ribosomal subunit protein bL33 from Jannaschia sp. (strain CCS1).